We begin with the raw amino-acid sequence, 132 residues long: Small ribosomal subunit protein bS6 (132 aa).

The tract at residues 96–132 is disordered; sequence HAEGPSIQMQKRDERERGDRGDRSDRGDRGDRGGFRR. The span at 105–132 shows a compositional bias: basic and acidic residues; sequence QKRDERERGDRGDRSDRGDRGDRGGFRR.

It belongs to the bacterial ribosomal protein bS6 family.

Binds together with bS18 to 16S ribosomal RNA. The sequence is that of Small ribosomal subunit protein bS6 from Cereibacter sphaeroides (strain ATCC 17023 / DSM 158 / JCM 6121 / CCUG 31486 / LMG 2827 / NBRC 12203 / NCIMB 8253 / ATH 2.4.1.) (Rhodobacter sphaeroides).